The chain runs to 110 residues: Coiled-coil-helix-coiled-coil-helix domain-containing protein 5 (110 aa).

M1 bears the N-acetylmethionine mark. CHCH domains are found at residues 9-52 (ARYC…PIIR) and 55-97 (RQAC…QPPR). 4 short sequence motifs (cx9C motif) span residues 12–22 (CGRELEQYGQC), 34–44 (CHYLKMSIAQC), 58–68 (CAQPFEAFEEC), and 79–89 (CAEHMRRFLQC). Cystine bridges form between C12-C44, C22-C34, C58-C89, and C68-C79.

In terms of assembly, monomer.

The protein resides in the mitochondrion intermembrane space. This chain is Coiled-coil-helix-coiled-coil-helix domain-containing protein 5 (CHCHD5), found in Homo sapiens (Human).